A 425-amino-acid polypeptide reads, in one-letter code: Serine--tRNA ligase (425 aa).

233–235 (TAE) is an L-serine binding site. 264–266 (RRE) is an ATP binding site. Glutamate 287 contacts L-serine. Position 351-354 (351-354 (EISS)) interacts with ATP. Serine 385 contributes to the L-serine binding site.

The protein belongs to the class-II aminoacyl-tRNA synthetase family. Type-1 seryl-tRNA synthetase subfamily. As to quaternary structure, homodimer. The tRNA molecule binds across the dimer.

The protein resides in the cytoplasm. The enzyme catalyses tRNA(Ser) + L-serine + ATP = L-seryl-tRNA(Ser) + AMP + diphosphate + H(+). It catalyses the reaction tRNA(Sec) + L-serine + ATP = L-seryl-tRNA(Sec) + AMP + diphosphate + H(+). It participates in aminoacyl-tRNA biosynthesis; selenocysteinyl-tRNA(Sec) biosynthesis; L-seryl-tRNA(Sec) from L-serine and tRNA(Sec): step 1/1. Its function is as follows. Catalyzes the attachment of serine to tRNA(Ser). Is also able to aminoacylate tRNA(Sec) with serine, to form the misacylated tRNA L-seryl-tRNA(Sec), which will be further converted into selenocysteinyl-tRNA(Sec). This Synechococcus sp. (strain CC9605) protein is Serine--tRNA ligase.